The sequence spans 66 residues: Toxin Aah6 (66 aa).

An LCN-type CS-alpha/beta domain is found at 2–65 (RDGYVVKNGT…LYGDDGTYCS (64 aa)). N-linked (GlcNAc...) asparagine glycosylation is present at N9. Intrachain disulfides connect C13–C64, C17–C40, C26–C45, and C30–C47.

The protein belongs to the long (4 C-C) scorpion toxin superfamily. Sodium channel inhibitor family. Beta subfamily. Post-translationally, N-glycans are core-fucosylated, heterogeneous and short which could be the result of extensive trimming. Expressed by the venom gland.

The protein localises to the secreted. In terms of biological role, beta toxins bind voltage-independently at site-4 of sodium channels and shift the voltage of activation toward more negative potentials thereby affecting sodium channel activation and promoting spontaneous and repetitive firing. This toxin is active only on insects. This toxin has very low anti-insect activity. The chain is Toxin Aah6 from Androctonus australis (Sahara scorpion).